Reading from the N-terminus, the 87-residue chain is Small ribosomal subunit protein bS20 (87 aa).

The interval 67–87 (HKNNGSRKASRLDAYVQSKQQ) is disordered.

Belongs to the bacterial ribosomal protein bS20 family.

In terms of biological role, binds directly to 16S ribosomal RNA. This Metamycoplasma arthritidis (strain 158L3-1) (Mycoplasma arthritidis) protein is Small ribosomal subunit protein bS20.